The following is a 440-amino-acid chain: Gap junction gamma-2 protein (440 aa).

The Cytoplasmic portion of the chain corresponds to 1–21 (MTNMSWSFLTRLLEEIHNHST). The helical transmembrane segment at 22-42 (FVGKVWLTVLVVFRIVLTAVG) threads the bilayer. The Extracellular segment spans residues 43–78 (GESIYSDEQSKFTCNTRQPGCDNVCYDAFAPLSHVR). Residues 79–99 (FWVFQIVVISTPSVMYLGYAV) form a helical membrane-spanning segment. Over 100–223 (HRLARASEQE…AQLVVRAAFE (124 aa)) the chain is Cytoplasmic. Residues 108–199 (QERRRALRRR…TPGPAGQHDG (92 aa)) are disordered. Residues 112–124 (RALRRRPGPRRLP) are compositionally biased toward basic residues. Residues 150 to 173 (LEEDEDEEPGAPEGPGEDTEEERT) show a composition bias toward acidic residues. Residues 224-244 (VAFLVGQYLLYGFEVPPFFAC) form a helical membrane-spanning segment. Over 245–264 (SRQPCPHVVDCFVSRPTEKT) the chain is Extracellular. Residues 265–285 (VFLLVMYVVSCLCLLLNLCEM) form a helical membrane-spanning segment. Over 286 to 440 (AHLGLGSAQD…SRDGKATVWI (155 aa)) the chain is Cytoplasmic. The segment at 368 to 440 (ADRDSPPCSG…SRDGKATVWI (73 aa)) is disordered. Ser372 carries the post-translational modification Phosphoserine. Over residues 380-401 (ATSRGPPRAGGPASGTGSATSG) the composition is skewed to low complexity.

This sequence belongs to the connexin family. Gamma-type subfamily. A connexon is composed of a hexamer of connexins. Interacts with TJP1. Mainly expressed by oligodendrocytes in the central nervous system. Expressed in optic nerve (at protein level).

It is found in the cell membrane. Its subcellular location is the cell junction. The protein localises to the gap junction. In terms of biological role, one gap junction consists of a cluster of closely packed pairs of transmembrane channels, the connexons, through which materials of low MW diffuse from one cell to a neighboring cell. May play a role in myelination in central and peripheral nervous systems. The protein is Gap junction gamma-2 protein (Gjc2) of Rattus norvegicus (Rat).